A 295-amino-acid chain; its full sequence is Porphobilinogen deaminase (295 aa).

At Cys-241 the chain carries S-(dipyrrolylmethanemethyl)cysteine.

Belongs to the HMBS family. In terms of assembly, monomer. Dipyrromethane is required as a cofactor.

The catalysed reaction is 4 porphobilinogen + H2O = hydroxymethylbilane + 4 NH4(+). Its pathway is porphyrin-containing compound metabolism; protoporphyrin-IX biosynthesis; coproporphyrinogen-III from 5-aminolevulinate: step 2/4. In terms of biological role, tetrapolymerization of the monopyrrole PBG into the hydroxymethylbilane pre-uroporphyrinogen in several discrete steps. This is Porphobilinogen deaminase from Lachnospira eligens (strain ATCC 27750 / DSM 3376 / VPI C15-48 / C15-B4) (Eubacterium eligens).